A 99-amino-acid chain; its full sequence is Large ribosomal subunit protein uL23 (99 aa).

It belongs to the universal ribosomal protein uL23 family. In terms of assembly, part of the 50S ribosomal subunit. Contacts protein L29, and trigger factor when it is bound to the ribosome.

One of the early assembly proteins it binds 23S rRNA. One of the proteins that surrounds the polypeptide exit tunnel on the outside of the ribosome. Forms the main docking site for trigger factor binding to the ribosome. The sequence is that of Large ribosomal subunit protein uL23 from Rhodopseudomonas palustris (strain HaA2).